The primary structure comprises 964 residues: Syndetin (964 aa).

The residue at position 1 (Met-1) is an N-acetylmethionine. The disordered stretch occupies residues 1–25; that stretch reads MQKIKSLMTRQGLKSPPESLNDLGA. Ser-15 is modified (phosphoserine). 2 coiled-coil regions span residues 81 to 107 and 216 to 244; these read LNLQ…VADL and YSCI…LSKI. 4 positions are modified to phosphoserine: Ser-494, Ser-498, Ser-559, and Ser-561. Residues 532–563 are disordered; that stretch reads DEETEDVLASNGYESDEQEKSAYQDYDSDSDV. Residue Lys-963 forms a Glycyl lysine isopeptide (Lys-Gly) (interchain with G-Cter in SUMO1); alternate linkage. Residue Lys-963 forms a Glycyl lysine isopeptide (Lys-Gly) (interchain with G-Cter in SUMO2); alternate linkage.

This sequence belongs to the syndetin family. In terms of assembly, component of the endosome-associated retrograde protein (EARP) complex, composed of VPS51, VPS52, VPS53 and VPS50/Syndetin. The EARP complex interacts with EIPR1. Interacts with VPS51 and VPS53 in an EIPR1-independent manner.

The protein resides in the recycling endosome. The protein localises to the membrane. Its function is as follows. Acts as a component of the EARP complex that is involved in endocytic recycling. The EARP complex associates with Rab4-positive endosomes and promotes recycling of internalized transferrin receptor (TFRC) to the plasma membrane. Within the EARP complex, required to tether the complex to recycling endosomes. Not involved in retrograde transport from early and late endosomes to the trans-Golgi network (TGN). The polypeptide is Syndetin (Mus musculus (Mouse)).